Reading from the N-terminus, the 214-residue chain is Large ribosomal subunit protein uL3 (214 aa).

The tract at residues 131-155 is disordered; the sequence is GAQRTSHGNSRSHRVPGSIGMAQDP. Residue glutamine 153 is modified to N5-methylglutamine.

It belongs to the universal ribosomal protein uL3 family. As to quaternary structure, part of the 50S ribosomal subunit. Forms a cluster with proteins L14 and L19. Methylated by PrmB.

Its function is as follows. One of the primary rRNA binding proteins, it binds directly near the 3'-end of the 23S rRNA, where it nucleates assembly of the 50S subunit. In Neisseria meningitidis serogroup C (strain 053442), this protein is Large ribosomal subunit protein uL3.